The following is a 359-amino-acid chain: Fructose-bisphosphate aldolase (359 aa).

A D-glyceraldehyde 3-phosphate-binding site is contributed by Ser61. Residue Asp109 is the Proton donor of the active site. 4 residues coordinate Zn(2+): His110, Asp144, Glu174, and His226. Gly227 lines the dihydroxyacetone phosphate pocket. His265 contacts Zn(2+). Residues 266–268 and 287–290 contribute to the dihydroxyacetone phosphate site; these read GGS and NIDT.

The protein belongs to the class II fructose-bisphosphate aldolase family. It depends on Zn(2+) as a cofactor.

It carries out the reaction beta-D-fructose 1,6-bisphosphate = D-glyceraldehyde 3-phosphate + dihydroxyacetone phosphate. Its pathway is carbohydrate degradation; glycolysis; D-glyceraldehyde 3-phosphate and glycerone phosphate from D-glucose: step 4/4. Its function is as follows. Catalyzes the aldol condensation of dihydroxyacetone phosphate (DHAP or glycerone-phosphate) with glyceraldehyde 3-phosphate (G3P) to form fructose 1,6-bisphosphate (FBP) in gluconeogenesis and the reverse reaction in glycolysis. This is Fructose-bisphosphate aldolase (fba) from Borreliella burgdorferi (strain ATCC 35210 / DSM 4680 / CIP 102532 / B31) (Borrelia burgdorferi).